The following is a 178-amino-acid chain: Large ribosomal subunit protein uL6 (178 aa).

Belongs to the universal ribosomal protein uL6 family. In terms of assembly, part of the 50S ribosomal subunit.

This protein binds to the 23S rRNA, and is important in its secondary structure. It is located near the subunit interface in the base of the L7/L12 stalk, and near the tRNA binding site of the peptidyltransferase center. The protein is Large ribosomal subunit protein uL6 of Streptococcus thermophilus (strain CNRZ 1066).